We begin with the raw amino-acid sequence, 293 residues long: 33 kDa chaperonin (293 aa).

2 disulfides stabilise this stretch: C237–C239 and C271–C274.

Belongs to the HSP33 family. Under oxidizing conditions two disulfide bonds are formed involving the reactive cysteines. Under reducing conditions zinc is bound to the reactive cysteines and the protein is inactive.

It is found in the cytoplasm. Its function is as follows. Redox regulated molecular chaperone. Protects both thermally unfolding and oxidatively damaged proteins from irreversible aggregation. Plays an important role in the bacterial defense system toward oxidative stress. In Haemophilus influenzae (strain PittEE), this protein is 33 kDa chaperonin.